Reading from the N-terminus, the 346-residue chain is Phospholipase A1 (346 aa).

Residues 1–26 (MRKFAAIFVVFFVQCTHLYSLAQARA) form the signal peptide. The propeptide occupies 27-37 (EPDPGVVEYLK). Residues Asn-44 and Asn-72 are each glycosylated (N-linked (GlcNAc...) asparagine). Ser-167 functions as the Nucleophile in the catalytic mechanism. N-linked (GlcNAc...) asparagine glycosylation occurs at Asn-185. Active-site charge relay system residues include Asp-195 and His-258.

Belongs to the AB hydrolase superfamily. Lipase family. Contains six disulfide bonds. In terms of processing, N-glycosylated; contains mannose. Expressed by the venom gland.

Its subcellular location is the secreted. The catalysed reaction is a 1,2-diacyl-sn-glycero-3-phosphocholine + H2O = a 2-acyl-sn-glycero-3-phosphocholine + a fatty acid + H(+). Its function is as follows. Catalyzes the hydrolysis of phosphatidylcholine with phospholipase A1 activity. Induces hemolytic activity. Acts as an allergen. This Solenopsis invicta (Red imported fire ant) protein is Phospholipase A1.